A 354-amino-acid chain; its full sequence is Phosphoribosylformylglycinamidine cyclo-ligase (354 aa).

The protein belongs to the AIR synthase family.

It is found in the cytoplasm. The enzyme catalyses 2-formamido-N(1)-(5-O-phospho-beta-D-ribosyl)acetamidine + ATP = 5-amino-1-(5-phospho-beta-D-ribosyl)imidazole + ADP + phosphate + H(+). It participates in purine metabolism; IMP biosynthesis via de novo pathway; 5-amino-1-(5-phospho-D-ribosyl)imidazole from N(2)-formyl-N(1)-(5-phospho-D-ribosyl)glycinamide: step 2/2. The sequence is that of Phosphoribosylformylglycinamidine cyclo-ligase from Marinobacter nauticus (strain ATCC 700491 / DSM 11845 / VT8) (Marinobacter aquaeolei).